Here is a 203-residue protein sequence, read N- to C-terminus: Dephospho-CoA kinase (203 aa).

The DPCK domain occupies serine 3 to alanine 201. Glycine 11–threonine 16 contributes to the ATP binding site.

Belongs to the CoaE family.

It localises to the cytoplasm. The enzyme catalyses 3'-dephospho-CoA + ATP = ADP + CoA + H(+). It functions in the pathway cofactor biosynthesis; coenzyme A biosynthesis; CoA from (R)-pantothenate: step 5/5. Catalyzes the phosphorylation of the 3'-hydroxyl group of dephosphocoenzyme A to form coenzyme A. This chain is Dephospho-CoA kinase, found in Burkholderia thailandensis (strain ATCC 700388 / DSM 13276 / CCUG 48851 / CIP 106301 / E264).